A 376-amino-acid polypeptide reads, in one-letter code: Alpha-2,8-sialyltransferase 8E (376 aa).

Residues 1–17 are Cytoplasmic-facing; that stretch reads MRYADPSANRDLLGNRT. A helical; Signal-anchor for type II membrane protein transmembrane segment spans residues 18 to 38; the sequence is LLFIFICAFALVTLLQQILYG. The Lumenal portion of the chain corresponds to 39–376; that stretch reads RNYIKRYFEF…RVHTGTCSCC (338 aa). Asn56 and Asn96 each carry an N-linked (GlcNAc...) asparagine glycan. Disulfide bonds link Cys164–Cys313 and Cys178–Cys373. Residues Asn192 and 214-216 contribute to the substrate site; that span reads NPS. N-linked (GlcNAc...) asparagine glycans are attached at residues Asn241 and Asn284. Residue 300-302 coordinates substrate; that stretch reads STG. His348 (proton donor/acceptor) is an active-site residue.

This sequence belongs to the glycosyltransferase 29 family.

Its subcellular location is the golgi apparatus membrane. It catalyses the reaction a ganglioside GQ1c (d18:1(4E)) + CMP-N-acetyl-beta-neuraminate = a ganglioside GP1c (d18:1(4E)) + CMP + H(+). It participates in protein modification; protein glycosylation. In terms of biological role, involved in the synthesis of gangliosides GD1c, GT1a, GQ1b, GP1c and GT3 from GD1a, GT1b, GM1b and GD3 respectively. This is Alpha-2,8-sialyltransferase 8E (ST8SIA5) from Pan troglodytes (Chimpanzee).